Reading from the N-terminus, the 124-residue chain is MCPQPHADHAITRGDTGAAGGRNWSGPFRKTPGRLVGMTLIRAYQLTLSSFIGNSCRHLPTCSEYGFEAIARYGLWAGGWLTLFRVVRCGPGGTHGFDPVPDSLAPRQRWYTPWRYWQPRRKDA.

Residues 1–12 (MCPQPHADHAIT) are compositionally biased toward basic and acidic residues. The segment at 1 to 26 (MCPQPHADHAITRGDTGAAGGRNWSG) is disordered.

It belongs to the UPF0161 family.

Its subcellular location is the cell inner membrane. Its function is as follows. Could be involved in insertion of integral membrane proteins into the membrane. This Rhizobium meliloti (strain 1021) (Ensifer meliloti) protein is Putative membrane protein insertion efficiency factor.